Here is a 531-residue protein sequence, read N- to C-terminus: MGNILEEIAAQRRLDVAAAKQVVSTDDLAKKIEHTESVYGPALPVLERLNAPAEQVQAYANAGASMISVLTEPKWFKGSLDDMMEAREVVEGMSQRPAILRKDFIIDVYQLLEARAYGADCVLLIVTLLSKEQLIELIDATHNLGMCALVEVNSVQELDIALAAKARLIGVNNRDLRTFKVDMNTTARVADAIRERGLSLGRDGVALFALSGIRSHTDVVKYEKCGARGILVGEYLMKSGDIATTVKDLLQNVTRHSESGEFALLPPLAKVCGITTVEYALAALRNGANMIGIIMAEHSPRYVEKEEAKAIAKAVREYGERTGPILSDILESHLDDKSDWFHRNVLALREACSRAPLVVGVFVNKTATEMNAAAEEIGLDLVQLHGDEGFEICKDIKYPTIRALHLPDTAQCDGVDAEAVLQQVSEGLANYILLDTTVKGQQGGTGVAFDWKIAAIFTQARLPCLMAGGLTPENVVKALSVGHPVGVDVSSGVEVKGSPGVKDLDKVAAFLKAVKDHLSVATLKIDEETEN.

Residues 1–254 (MGNILEEIAA…TVKDLLQNVT (254 aa)) are indole-3-glycerol phosphate synthase. The tract at residues 255 to 531 (RHSESGEFAL…TLKIDEETEN (277 aa)) is N-(5'-phosphoribosyl)anthranilate isomerase.

The protein in the N-terminal section; belongs to the TrpC family. This sequence in the C-terminal section; belongs to the TrpF family.

The catalysed reaction is N-(5-phospho-beta-D-ribosyl)anthranilate = 1-(2-carboxyphenylamino)-1-deoxy-D-ribulose 5-phosphate. It carries out the reaction 1-(2-carboxyphenylamino)-1-deoxy-D-ribulose 5-phosphate + H(+) = (1S,2R)-1-C-(indol-3-yl)glycerol 3-phosphate + CO2 + H2O. Its pathway is amino-acid biosynthesis; L-tryptophan biosynthesis; L-tryptophan from chorismate: step 3/5. It functions in the pathway amino-acid biosynthesis; L-tryptophan biosynthesis; L-tryptophan from chorismate: step 4/5. Bifunctional enzyme that catalyzes two sequential steps of tryptophan biosynthetic pathway. This Phytophthora nicotianae (Potato buckeye rot agent) protein is Tryptophan biosynthesis protein TRP1 (TRP1).